A 318-amino-acid polypeptide reads, in one-letter code: Acetyl-coenzyme A carboxylase carboxyl transferase subunit alpha (318 aa).

One can recognise a CoA carboxyltransferase C-terminal domain in the interval 39–292 (LTDKSEKQLR…GDSIAAELPD (254 aa)).

Belongs to the AccA family. In terms of assembly, acetyl-CoA carboxylase is a heterohexamer composed of biotin carboxyl carrier protein (AccB), biotin carboxylase (AccC) and two subunits each of ACCase subunit alpha (AccA) and ACCase subunit beta (AccD).

It localises to the cytoplasm. The enzyme catalyses N(6)-carboxybiotinyl-L-lysyl-[protein] + acetyl-CoA = N(6)-biotinyl-L-lysyl-[protein] + malonyl-CoA. The protein operates within lipid metabolism; malonyl-CoA biosynthesis; malonyl-CoA from acetyl-CoA: step 1/1. In terms of biological role, component of the acetyl coenzyme A carboxylase (ACC) complex. First, biotin carboxylase catalyzes the carboxylation of biotin on its carrier protein (BCCP) and then the CO(2) group is transferred by the carboxyltransferase to acetyl-CoA to form malonyl-CoA. This chain is Acetyl-coenzyme A carboxylase carboxyl transferase subunit alpha, found in Gluconacetobacter diazotrophicus (strain ATCC 49037 / DSM 5601 / CCUG 37298 / CIP 103539 / LMG 7603 / PAl5).